The chain runs to 637 residues: Zinc finger protein rsv2 (637 aa).

Disordered stretches follow at residues 1–41 (MDTT…SKMN), 145–164 (SNHQ…PTSA), 169–207 (IITA…QPFS), 221–363 (TGAI…STAL), 404–427 (QDSF…TRSY), and 440–558 (SVNP…GAQR). Over residues 172–189 (ANSSPSGNAGSNASASMS) the composition is skewed to low complexity. Residues 196–207 (PSASTINDQPFS) show a composition bias toward polar residues. Residues 279–296 (SDLKRSLGHNQKSDRVSK) show a composition bias toward basic and acidic residues. Polar residues predominate over residues 298 to 344 (VSPQHQANPSTLNNPLKTQNFDSSKNLYTDNKDSSLVSPTGLQSRME). Basic and acidic residues-rich tracts occupy residues 345 to 355 (QNPEVRAHPMK) and 404 to 413 (QDSFNKESIK). The span at 455–471 (VPSNTTISSSPPLTSPV) shows a compositional bias: low complexity. Composition is skewed to polar residues over residues 472–498 (KTSA…QSAA) and 508–527 (YYNT…QKVS). Residues 544 to 554 (TTPTNSSTTAT) show a composition bias toward low complexity. A C2H2-type 1 zinc finger spans residues 572-603 (VRCTLQNRVTGEICNTVFSRTYDLIRHQDTIH). A C2H2-type 2; degenerate zinc finger spans residues 610–635 (FRCEICGDQRHFSRHDALVRHLRVKH).

It is found in the nucleus. This chain is Zinc finger protein rsv2 (rsv2), found in Schizosaccharomyces pombe (strain 972 / ATCC 24843) (Fission yeast).